Reading from the N-terminus, the 165-residue chain is 6,7-dimethyl-8-ribityllumazine synthase 2 (165 aa).

5-amino-6-(D-ribitylamino)uracil-binding positions include tryptophan 24, 56-58 (SFE), and 80-82 (LVV). Arginine 88 serves as the catalytic Proton donor. Position 113 (serine 113) interacts with 5-amino-6-(D-ribitylamino)uracil. (2S)-2-hydroxy-3-oxobutyl phosphate is bound at residue histidine 127.

The protein belongs to the DMRL synthase family.

The catalysed reaction is (2S)-2-hydroxy-3-oxobutyl phosphate + 5-amino-6-(D-ribitylamino)uracil = 6,7-dimethyl-8-(1-D-ribityl)lumazine + phosphate + 2 H2O + H(+). It participates in cofactor biosynthesis; riboflavin biosynthesis; riboflavin from 2-hydroxy-3-oxobutyl phosphate and 5-amino-6-(D-ribitylamino)uracil: step 1/2. Its function is as follows. Catalyzes the formation of 6,7-dimethyl-8-ribityllumazine by condensation of 5-amino-6-(D-ribitylamino)uracil with 3,4-dihydroxy-2-butanone 4-phosphate. This is the penultimate step in the biosynthesis of riboflavin. This is 6,7-dimethyl-8-ribityllumazine synthase 2 from Bradyrhizobium diazoefficiens (strain JCM 10833 / BCRC 13528 / IAM 13628 / NBRC 14792 / USDA 110).